A 732-amino-acid chain; its full sequence is Elongation factor 2 (732 aa).

A tr-type G domain is found at 19–260; it reads ERIRNMGIAA…MVVRHLPNPL (242 aa). Residues 28–35, 94–98, and 148–151 contribute to the GTP site; these read AHIDHGKT, DTPGH, and NKVD. His-597 carries the diphthamide modification.

The protein belongs to the TRAFAC class translation factor GTPase superfamily. Classic translation factor GTPase family. EF-G/EF-2 subfamily.

Its subcellular location is the cytoplasm. In terms of biological role, catalyzes the GTP-dependent ribosomal translocation step during translation elongation. During this step, the ribosome changes from the pre-translocational (PRE) to the post-translocational (POST) state as the newly formed A-site-bound peptidyl-tRNA and P-site-bound deacylated tRNA move to the P and E sites, respectively. Catalyzes the coordinated movement of the two tRNA molecules, the mRNA and conformational changes in the ribosome. The chain is Elongation factor 2 from Thermococcus onnurineus (strain NA1).